The sequence spans 300 residues: 4-hydroxy-tetrahydrodipicolinate synthase (300 aa).

T56 contacts pyruvate. Y145 functions as the Proton donor/acceptor in the catalytic mechanism. K173 acts as the Schiff-base intermediate with substrate in catalysis. V215 contributes to the pyruvate binding site.

The protein belongs to the DapA family. Homotetramer; dimer of dimers.

The protein resides in the cytoplasm. It carries out the reaction L-aspartate 4-semialdehyde + pyruvate = (2S,4S)-4-hydroxy-2,3,4,5-tetrahydrodipicolinate + H2O + H(+). Its pathway is amino-acid biosynthesis; L-lysine biosynthesis via DAP pathway; (S)-tetrahydrodipicolinate from L-aspartate: step 3/4. Its function is as follows. Catalyzes the condensation of (S)-aspartate-beta-semialdehyde [(S)-ASA] and pyruvate to 4-hydroxy-tetrahydrodipicolinate (HTPA). The protein is 4-hydroxy-tetrahydrodipicolinate synthase of Prochlorococcus marinus (strain AS9601).